The following is an 83-amino-acid chain: Retinal cone rhodopsin-sensitive cGMP 3',5'-cyclic phosphodiesterase subunit gamma (83 aa).

The interval 1 to 51 (MSDSPCLSPPAPSQGPTTPRKGPPKFKQRQTRQFKSKPPKKGVKGFGDDIP) is disordered. Over residues 22-43 (GPPKFKQRQTRQFKSKPPKKGV) the composition is skewed to basic residues.

This sequence belongs to the rod/cone cGMP-PDE gamma subunit family. In terms of assembly, tetramer composed of two catalytic chains (alpha and beta), and two inhibitory chains (gamma).

The catalysed reaction is 3',5'-cyclic GMP + H2O = GMP + H(+). Functionally, participates in processes of transmission and amplification of the visual signal. cGMP-PDEs are the effector molecules in G-protein-mediated phototransduction in vertebrate rods and cones. The polypeptide is Retinal cone rhodopsin-sensitive cGMP 3',5'-cyclic phosphodiesterase subunit gamma (Pde6h) (Rattus norvegicus (Rat)).